Consider the following 414-residue polypeptide: Eukaryotic initiation factor 4A (414 aa).

Positions 41–69 (ESFDDMGLQENLLRGIYAYGFEKPSAIQQ) match the Q motif motif. The 171-residue stretch at 72–242 (IVPFCKGLDV…RKFMNKPVRI (171 aa)) folds into the Helicase ATP-binding domain. 85–92 (AQSGTGKT) contacts ATP. The short motif at 190–193 (DEAD) is the DEAD box element. One can recognise a Helicase C-terminal domain in the interval 253–414 (GIKQFYVNVE…ELPANVADLL (162 aa)).

This sequence belongs to the DEAD box helicase family. eIF4A subfamily. As to quaternary structure, eIF4F is a multi-subunit complex, the composition of which varies with external and internal environmental conditions. It is composed of at least EIF4A, EIF4E and EIF4G.

The enzyme catalyses ATP + H2O = ADP + phosphate + H(+). In terms of biological role, ATP-dependent RNA helicase which is a subunit of the eIF4F complex involved in cap recognition and is required for mRNA binding to ribosome. In the current model of translation initiation, eIF4A unwinds RNA secondary structures in the 5'-UTR of mRNAs which is necessary to allow efficient binding of the small ribosomal subunit, and subsequent scanning for the initiator codon. The polypeptide is Eukaryotic initiation factor 4A (Triticum aestivum (Wheat)).